The chain runs to 472 residues: Tubulin gamma chain (472 aa).

Ala142–Gly148 contributes to the GTP binding site.

It belongs to the tubulin family. Component of the gamma-tubulin small complex (gamma-TuSC) composed of tubulin gamma chain, gamma-tubulin complex protein 2 (GCP2) and gamma-tubulin complex protein 3 (GCP3). Interacts with GCP2 and GCP3. Interacts with EB1.

The protein localises to the cytoplasm. The protein resides in the cytoskeleton. It localises to the flagellum axoneme. Its subcellular location is the flagellum basal body. It is found in the spindle. The protein localises to the microtubule organizing center. Tubulin is the major constituent of microtubules (Potential). The gamma chain is found at microtubule organizing centers (MTOC) such as the centrosome. Component of the gamma-tubulin small complex (gamma-TuSC) involved in microtubule nucleation for the formation of median bodies and in the biogenesis of flagella. Gamma-TuSC may be required for the correct positioning of EB1 within the trophozoites. The sequence is that of Tubulin gamma chain from Giardia intestinalis (strain ATCC 50803 / WB clone C6) (Giardia lamblia).